A 293-amino-acid chain; its full sequence is Fructose-bisphosphate aldolase (293 aa).

Residue Ser50 coordinates D-glyceraldehyde 3-phosphate. Asp85 serves as the catalytic Proton donor. Zn(2+)-binding residues include His86, Asp106, Glu136, and His178. Gly179 contributes to the dihydroxyacetone phosphate binding site. Zn(2+) is bound at residue His208. Residues 209–211 (GGS) and 230–233 (NVNT) contribute to the dihydroxyacetone phosphate site.

Belongs to the class II fructose-bisphosphate aldolase family. It depends on Zn(2+) as a cofactor.

The enzyme catalyses beta-D-fructose 1,6-bisphosphate = D-glyceraldehyde 3-phosphate + dihydroxyacetone phosphate. It functions in the pathway carbohydrate degradation; glycolysis; D-glyceraldehyde 3-phosphate and glycerone phosphate from D-glucose: step 4/4. Functionally, catalyzes the aldol condensation of dihydroxyacetone phosphate (DHAP or glycerone-phosphate) with glyceraldehyde 3-phosphate (G3P) to form fructose 1,6-bisphosphate (FBP) in gluconeogenesis and the reverse reaction in glycolysis. This chain is Fructose-bisphosphate aldolase (fba), found in Streptococcus pyogenes serotype M6 (strain ATCC BAA-946 / MGAS10394).